The sequence spans 302 residues: Cardiolipin synthase (CMP-forming) (302 aa).

Residues 65-84 (PRTHCSGAGKAAPEPAAGGD) are disordered. Low complexity predominate over residues 71 to 84 (GAGKAAPEPAAGGD). The next 5 helical transmembrane spans lie at 109-129 (IPNL…YLIL), 133-153 (FNVA…DGFI), 190-212 (IPVP…VFYV), 250-270 (LILV…SIYL), and 271-289 (QILW…YSYY).

This sequence belongs to the CDP-alcohol phosphatidyltransferase class-I family. The cofactor is a divalent metal cation.

The protein localises to the mitochondrion inner membrane. It catalyses the reaction a CDP-1,2-diacyl-sn-glycerol + a 1,2-diacyl-sn-glycero-3-phospho-(1'-sn-glycerol) = a cardiolipin + CMP + H(+). Functionally, catalyzes the synthesis of cardiolipin (CL) (diphosphatidylglycerol) by specifically transferring a phosphatidyl group from CDP-diacylglycerol to phosphatidylglycerol (PG). CL is a key phospholipid in mitochondrial membranes and plays important roles in maintaining the functional integrity and dynamics of mitochondria under both optimal and stress conditions. The chain is Cardiolipin synthase (CMP-forming) (Crls1) from Rattus norvegicus (Rat).